Consider the following 169-residue polypeptide: Phosphopantetheine adenylyltransferase (169 aa).

Residue threonine 9 coordinates substrate. Residues 9-10 and histidine 17 contribute to the ATP site; that span reads TF. Substrate contacts are provided by lysine 41, leucine 73, and arginine 87. Residues 88–90, glutamate 98, and 123–129 each bind ATP; these read GLR and YQFISGT.

It belongs to the bacterial CoaD family. As to quaternary structure, homohexamer. Mg(2+) is required as a cofactor.

It localises to the cytoplasm. It catalyses the reaction (R)-4'-phosphopantetheine + ATP + H(+) = 3'-dephospho-CoA + diphosphate. It functions in the pathway cofactor biosynthesis; coenzyme A biosynthesis; CoA from (R)-pantothenate: step 4/5. Reversibly transfers an adenylyl group from ATP to 4'-phosphopantetheine, yielding dephospho-CoA (dPCoA) and pyrophosphate. This chain is Phosphopantetheine adenylyltransferase, found in Bordetella bronchiseptica (strain ATCC BAA-588 / NCTC 13252 / RB50) (Alcaligenes bronchisepticus).